Consider the following 232-residue polypeptide: Replicative helicase loading/DNA remodeling protein DnaD (232 aa).

The N-terminal domain stretch occupies residues 1–98 (MKKQQFIDMQ…QNGIKFEKYS (98 aa)). A DDBH1 region spans residues 1 to 116 (MKKQQFIDMQ…YEYIQLAQNQ (116 aa)). The C-terminal domain stretch occupies residues 99-205 (LQPLWGKLYE…VEQAKIHSQK (107 aa)). A DDBH2 region spans residues 131 to 200 (TIFEEEFARP…NGLKTVEQAK (70 aa)). The C-terminal tail stretch occupies residues 206-232 (FRRVQAKQNEPQKEYKRQVPFYNWLEQ).

Belongs to the DnaB/DnaD family. In terms of assembly, the DNA replisome assembles sequentially on oriC in this order; DnaA, DnaD, DnaB, DnaI-DnaC helicase. Homodimer. Homotetramer. Oligomerization in vitro is concentration dependent. Part of the replication restart primosome which assembles in this order; PriA, DnaD then DnaB. The preferred DNA substrate mimics an arrested DNA replication fork with unreplicated lagging strand. Interacts with DnaA, DnaB and PriA. Interaction with DnaB requires DnaD to dimerize.

Its subcellular location is the cytoplasm. With respect to regulation, recruitment to oriC requires DnaA but not DnaB, DnaC or DnaI and is blocked by SirA. In terms of biological role, required to load replicative helicase DnaC onto replication forks. Binds to a DnaD recognition element (DRE) which has pairs of 5'-TnnT-3' motifs; there is a strong DRE at oriC opposite the DnaA-trios recognized by DnaA. During DNA replication from the origin of replication (oriC) in the DNA replisome, DnaD is required after DnaA, before DnaB and subsequent helicase DnaC loading. A component of the replication restart primosome, which reloads the replicative helicase on sites other than oriC. DnaB, DnaD and DnaI may also be required for a PriA-independent pathway of replication fork restart. DnaB and DnaD work together to allow DnaB access to single-stranded (ss)DNA. Has DNA remodeling activity that converts supercoiled plasmid into an open circular form; DnaD forms scaffolds inside the plasmid DNA. Plasmid relaxation incorporates both wrapping around the DnaD protein scaffold and simultaneous untwisting, no nicking of the DNA is seen. Also converts linear DNA into an open circular form. Disrupts a replicative helicase-DnaI complex. Inhibits the ability of DnaA-ATP to form a helix on DNA; does not disassemble preformed helices in vitro. Binds ssDNA, and replication fork-like substrates, supercoiled plasmid, but not stably to short double-stranded (ds)DNA. DnaD stimulates DnaB DNA-binding activities. DnaB and DnaD are required to load helicase on the repN plasmid origin of replication (oriN). Causes a severe growth defect upon overexpression even in an oriC-independent strain. This Bacillus subtilis (strain 168) protein is Replicative helicase loading/DNA remodeling protein DnaD.